The following is a 136-amino-acid chain: Probable 5-hydroxyisourate hydrolase ZK697.8 (136 aa).

Positions 1-19 are cleaved as a signal peptide; that stretch reads MIKFLLFLAIAAATVISNA. Residues histidine 31, arginine 69, and tyrosine 133 each coordinate substrate.

This sequence belongs to the transthyretin family. 5-hydroxyisourate hydrolase subfamily. In terms of assembly, homotetramer.

It carries out the reaction 5-hydroxyisourate + H2O = 5-hydroxy-2-oxo-4-ureido-2,5-dihydro-1H-imidazole-5-carboxylate + H(+). Its function is as follows. Catalyzes the hydrolysis of 5-hydroxyisourate (HIU) to 2-oxo-4-hydroxy-4-carboxy-5-ureidoimidazoline (OHCU). In Caenorhabditis elegans, this protein is Probable 5-hydroxyisourate hydrolase ZK697.8.